The sequence spans 206 residues: N-(5'-phosphoribosyl)anthranilate isomerase (206 aa).

Belongs to the TrpF family.

The catalysed reaction is N-(5-phospho-beta-D-ribosyl)anthranilate = 1-(2-carboxyphenylamino)-1-deoxy-D-ribulose 5-phosphate. Its pathway is amino-acid biosynthesis; L-tryptophan biosynthesis; L-tryptophan from chorismate: step 3/5. This Nitrosococcus oceani (strain ATCC 19707 / BCRC 17464 / JCM 30415 / NCIMB 11848 / C-107) protein is N-(5'-phosphoribosyl)anthranilate isomerase.